We begin with the raw amino-acid sequence, 705 residues long: Phosphoribosylformylglycinamidine synthase subunit PurL (705 aa).

The active site involves His32. Position 35 (Tyr35) interacts with ATP. Glu76 is a binding site for Mg(2+). Residues 77–80 (SHNH) and Arg99 each bind substrate. His78 acts as the Proton acceptor in catalysis. Asp100 provides a ligand contact to Mg(2+). Residue Gln224 coordinates substrate. Asp252 contacts Mg(2+). 296–298 (ESQ) provides a ligand contact to substrate. 2 residues coordinate ATP: Asp471 and Gly508. Asn509 lines the Mg(2+) pocket. Ser511 is a binding site for substrate.

This sequence belongs to the FGAMS family. In terms of assembly, monomer. Part of the FGAM synthase complex composed of 1 PurL, 1 PurQ and 2 PurS subunits.

The protein resides in the cytoplasm. The enzyme catalyses N(2)-formyl-N(1)-(5-phospho-beta-D-ribosyl)glycinamide + L-glutamine + ATP + H2O = 2-formamido-N(1)-(5-O-phospho-beta-D-ribosyl)acetamidine + L-glutamate + ADP + phosphate + H(+). It functions in the pathway purine metabolism; IMP biosynthesis via de novo pathway; 5-amino-1-(5-phospho-D-ribosyl)imidazole from N(2)-formyl-N(1)-(5-phospho-D-ribosyl)glycinamide: step 1/2. Its function is as follows. Part of the phosphoribosylformylglycinamidine synthase complex involved in the purines biosynthetic pathway. Catalyzes the ATP-dependent conversion of formylglycinamide ribonucleotide (FGAR) and glutamine to yield formylglycinamidine ribonucleotide (FGAM) and glutamate. The FGAM synthase complex is composed of three subunits. PurQ produces an ammonia molecule by converting glutamine to glutamate. PurL transfers the ammonia molecule to FGAR to form FGAM in an ATP-dependent manner. PurS interacts with PurQ and PurL and is thought to assist in the transfer of the ammonia molecule from PurQ to PurL. The polypeptide is Phosphoribosylformylglycinamidine synthase subunit PurL (Pyrococcus abyssi (strain GE5 / Orsay)).